Consider the following 674-residue polypeptide: Linear primary-alkylsulfatase (674 aa).

Positions 1–41 (MKLNALSTATHGSRSSPVKLWKFSTSFLLAASIIVSGQSWA) are cleaved as a signal peptide. Zn(2+) is bound by residues histidine 192, histidine 194, aspartate 196, histidine 197, glutamate 303, and glutamate 322. Sulfate-binding positions include 330–335 (NTYSLR) and arginine 340. Residue histidine 367 participates in Zn(2+) binding. Tyrosine 428 is a sulfate binding site.

It belongs to the metallo-beta-lactamase superfamily. Type III sulfatase family. In terms of assembly, homodimer. The cofactor is Zn(2+).

It is found in the periplasm. The enzyme catalyses a primary linear alkyl sulfate ester + H2O = a primary alcohol + sulfate + H(+). Its activity is regulated as follows. Inhibited by EDTA. Slightly activated in the presence of Ca(2+). Its function is as follows. Alkylsulfatase that cleaves primary alkyl sulfates such as sodium octyl sulfate and the widely used detergent sodium dodecyl sulfate (SDS). In Pseudomonas sp, this protein is Linear primary-alkylsulfatase.